The sequence spans 96 residues: Putative pterin-4-alpha-carbinolamine dehydratase (96 aa).

Belongs to the pterin-4-alpha-carbinolamine dehydratase family.

It carries out the reaction (4aS,6R)-4a-hydroxy-L-erythro-5,6,7,8-tetrahydrobiopterin = (6R)-L-erythro-6,7-dihydrobiopterin + H2O. The chain is Putative pterin-4-alpha-carbinolamine dehydratase from Prochlorococcus marinus (strain MIT 9313).